Consider the following 561-residue polypeptide: DNA ligase B (561 aa).

The N6-AMP-lysine intermediate role is filled by Lys-125.

This sequence belongs to the NAD-dependent DNA ligase family. LigB subfamily.

The catalysed reaction is NAD(+) + (deoxyribonucleotide)n-3'-hydroxyl + 5'-phospho-(deoxyribonucleotide)m = (deoxyribonucleotide)n+m + AMP + beta-nicotinamide D-nucleotide.. In terms of biological role, catalyzes the formation of phosphodiester linkages between 5'-phosphoryl and 3'-hydroxyl groups in double-stranded DNA using NAD as a coenzyme and as the energy source for the reaction. The chain is DNA ligase B from Salmonella paratyphi A (strain AKU_12601).